A 594-amino-acid polypeptide reads, in one-letter code: Protein CBFA2T2 (594 aa).

Ser24 is modified (phosphoserine). Lys29 participates in a covalent cross-link: Glycyl lysine isopeptide (Lys-Gly) (interchain with G-Cter in SUMO2). Positions 48-96 (GGPRPVSFTPTALSNGINHSPPTLNGAPSPPQRFSNGPASSTSSALTNQ) are disordered. Composition is skewed to polar residues over residues 55–70 (FTPTALSNGINHSPPT) and 79–96 (QRFSNGPASSTSSALTNQ). The interval 98 to 206 (LPATCGARQL…QHEHLLLNTS (109 aa)) is interaction with PRDM14. A TAFH domain is found at 104–199 (ARQLSKLKRF…TPSQYLAQHE (96 aa)). A disordered region spans residues 220 to 257 (VHGNGKRPSPERRDENNFERDTVPPEPPAKRVCTISPA). Over residues 227-242 (PSPERRDENNFERDTV) the composition is skewed to basic and acidic residues. At Ser255 the chain carries Phosphoserine. A nervy homology region 2 (NHR2) region spans residues 322–368 (QDELVDHRLTEREWADEWKHLDHALNCIMEMVEKTRRSMAVLRRCQE). The segment at 388-416 (RKTGTELVSRQHSPGSTDSLSNDSQREFT) is disordered. Residues 393-410 (ELVSRQHSPGSTDSLSND) are compositionally biased toward polar residues. Ser400 is modified (phosphoserine). A nervy homology region 3 (NHR3) region spans residues 426–475 (VEFWKKTEEAVNKVKIQAMSEVQKAVAEAEQKAFEVIATERARMEQTIAD). Lys440 is covalently cross-linked (Glycyl lysine isopeptide (Lys-Gly) (interchain with G-Cter in SUMO2)). Residues 442–482 (QAMSEVQKAVAEAEQKAFEVIATERARMEQTIADVKRQAAE) are a coiled coil. Zn(2+) is bound by residues Cys498, Cys501, Cys509, Cys512, Cys518, Cys522, His530, and Cys534. The MYND-type zinc-finger motif lies at 498–534 (CWNCGRKASETCSGCNIARYCGSFCQHKDWERHHRLC). The segment at 538 to 594 (LHGHSPHSQSRPLLPGGRGSARSADCSVPSPALDKTSATTSRSSTPASVTAIDANGL) is disordered. The residue at position 567 (Ser567) is a Phosphoserine. Positions 573-588 (TSATTSRSSTPASVTA) are enriched in low complexity.

This sequence belongs to the CBFA2T family. In terms of assembly, homooligomer. Homotetramerization is mediated by the NHR2 domain. Interacts with CBFA2T3/MTG16. Can interact with RUNX1T1/CBFA2T1. Heterotetramerization between members of the CBFA2T family is proposed. Interacts with RBP, GFI1, TCF4, PRDM14. Interacts with TAL1 and CBFA2T3/MTG16; the heteromer with CBFA2T3/MTG16 may function in repression of TAL1. As to expression, expressed in embryonic stem cells.

It is found in the nucleus. In terms of biological role, transcriptional corepressor which facilitates transcriptional repression via its association with DNA-binding transcription factors and recruitment of other corepressors and histone-modifying enzymes. Via association with PRDM14 is involved in regulation of embryonic stem cell (ESC) pluripotency. Involved in primordial germ cell (PCG) formation. Stabilizes PRDM14 and OCT4 on chromatin in a homooligomerization-dependent mannerCan repress the expression of MMP7 in a ZBTB33-dependent manner. Through heteromerization with CBFA2T3/MTG16 may be involved in regulation of the proliferation and the differentiation of erythroid progenitors by repressing the expression of TAL1 target genes. Required for the maintenance of the secretory cell lineage in the small intestine. Can inhibit Notch signaling probably by association with RBPJ and may be involved in GFI1-mediated Paneth cell differentiation. The sequence is that of Protein CBFA2T2 (Cbfa2t2) from Mus musculus (Mouse).